The primary structure comprises 162 residues: Peptide methionine sulfoxide reductase MsrA (162 aa).

Cys10 is a catalytic residue.

This sequence belongs to the MsrA Met sulfoxide reductase family.

The enzyme catalyses L-methionyl-[protein] + [thioredoxin]-disulfide + H2O = L-methionyl-(S)-S-oxide-[protein] + [thioredoxin]-dithiol. The catalysed reaction is [thioredoxin]-disulfide + L-methionine + H2O = L-methionine (S)-S-oxide + [thioredoxin]-dithiol. Has an important function as a repair enzyme for proteins that have been inactivated by oxidation. Catalyzes the reversible oxidation-reduction of methionine sulfoxide in proteins to methionine. The protein is Peptide methionine sulfoxide reductase MsrA of Clostridium acetobutylicum (strain ATCC 824 / DSM 792 / JCM 1419 / IAM 19013 / LMG 5710 / NBRC 13948 / NRRL B-527 / VKM B-1787 / 2291 / W).